A 145-amino-acid polypeptide reads, in one-letter code: RNA polymerase-binding transcription factor DksA (145 aa).

Cysteine 108, cysteine 111, cysteine 129, and cysteine 132 together coordinate Zn(2+). A dksA C4-type zinc finger spans residues 108–132; it reads CDCCGEEIGIRRLEARPTADLCIDC.

Belongs to the DksA family. As to quaternary structure, interacts directly with the RNA polymerase.

The protein resides in the cytoplasm. Functionally, transcription factor that acts by binding directly to the RNA polymerase (RNAP). Required for negative regulation of rRNA expression and positive regulation of several amino acid biosynthesis promoters. Also required for regulation of fis expression. This is RNA polymerase-binding transcription factor DksA from Haemophilus influenzae (strain ATCC 51907 / DSM 11121 / KW20 / Rd).